A 97-amino-acid chain; its full sequence is Aspartyl/glutamyl-tRNA(Asn/Gln) amidotransferase subunit C (97 aa).

This sequence belongs to the GatC family. Heterotrimer of A, B and C subunits.

It carries out the reaction L-glutamyl-tRNA(Gln) + L-glutamine + ATP + H2O = L-glutaminyl-tRNA(Gln) + L-glutamate + ADP + phosphate + H(+). It catalyses the reaction L-aspartyl-tRNA(Asn) + L-glutamine + ATP + H2O = L-asparaginyl-tRNA(Asn) + L-glutamate + ADP + phosphate + 2 H(+). In terms of biological role, allows the formation of correctly charged Asn-tRNA(Asn) or Gln-tRNA(Gln) through the transamidation of misacylated Asp-tRNA(Asn) or Glu-tRNA(Gln) in organisms which lack either or both of asparaginyl-tRNA or glutaminyl-tRNA synthetases. The reaction takes place in the presence of glutamine and ATP through an activated phospho-Asp-tRNA(Asn) or phospho-Glu-tRNA(Gln). The polypeptide is Aspartyl/glutamyl-tRNA(Asn/Gln) amidotransferase subunit C (Cyanothece sp. (strain PCC 7425 / ATCC 29141)).